Reading from the N-terminus, the 681-residue chain is Macrolide export ATP-binding/permease protein MacB (681 aa).

Positions 6 to 244 (LKLAAVTRRF…FAEVGVGAAA (239 aa)) constitute an ABC transporter domain. 42–49 (GASGSGKS) contributes to the ATP binding site. The disordered stretch occupies residues 246 to 274 (TETAADTRSAPASGDAPPPANNDTAADPA). The next 4 membrane-spanning stretches (helical) occupy residues 306 to 326 (LLTM…VAVG), 554 to 574 (LTLL…IGVM), 611 to 631 (LVCL…GALF), and 644 to 664 (AGAI…FGFM).

The protein belongs to the ABC transporter superfamily. Macrolide exporter (TC 3.A.1.122) family. As to quaternary structure, homodimer.

It is found in the cell inner membrane. Functionally, non-canonical ABC transporter that contains transmembrane domains (TMD), which form a pore in the inner membrane, and an ATP-binding domain (NBD), which is responsible for energy generation. Confers resistance against macrolides. The chain is Macrolide export ATP-binding/permease protein MacB from Burkholderia cenocepacia (strain HI2424).